The following is a 1372-amino-acid chain: DNA-directed RNA polymerase subunit beta (1372 aa).

This sequence belongs to the RNA polymerase beta chain family. As to quaternary structure, the RNAP catalytic core consists of 2 alpha, 1 beta, 1 beta' and 1 omega subunit. When a sigma factor is associated with the core the holoenzyme is formed, which can initiate transcription.

The enzyme catalyses RNA(n) + a ribonucleoside 5'-triphosphate = RNA(n+1) + diphosphate. DNA-dependent RNA polymerase catalyzes the transcription of DNA into RNA using the four ribonucleoside triphosphates as substrates. This Psychrobacter cryohalolentis (strain ATCC BAA-1226 / DSM 17306 / VKM B-2378 / K5) protein is DNA-directed RNA polymerase subunit beta.